A 274-amino-acid polypeptide reads, in one-letter code: 2,3,4,5-tetrahydropyridine-2,6-dicarboxylate N-succinyltransferase (274 aa).

It belongs to the transferase hexapeptide repeat family.

It is found in the cytoplasm. It carries out the reaction (S)-2,3,4,5-tetrahydrodipicolinate + succinyl-CoA + H2O = (S)-2-succinylamino-6-oxoheptanedioate + CoA. It participates in amino-acid biosynthesis; L-lysine biosynthesis via DAP pathway; LL-2,6-diaminopimelate from (S)-tetrahydrodipicolinate (succinylase route): step 1/3. The sequence is that of 2,3,4,5-tetrahydropyridine-2,6-dicarboxylate N-succinyltransferase from Leptothrix cholodnii (strain ATCC 51168 / LMG 8142 / SP-6) (Leptothrix discophora (strain SP-6)).